A 339-amino-acid chain; its full sequence is Protein pelota homolog (339 aa).

The protein belongs to the eukaryotic release factor 1 family. Pelota subfamily. As to quaternary structure, monomer. The cofactor is a divalent metal cation.

The protein resides in the cytoplasm. In terms of biological role, may function in recognizing stalled ribosomes, interact with stem-loop structures in stalled mRNA molecules, and effect endonucleolytic cleavage of the mRNA. May play a role in the release non-functional ribosomes and degradation of damaged mRNAs. Has endoribonuclease activity. The protein is Protein pelota homolog (pelA) of Thermoplasma acidophilum (strain ATCC 25905 / DSM 1728 / JCM 9062 / NBRC 15155 / AMRC-C165).